The primary structure comprises 155 residues: Ribonuclease H (155 aa).

Residues 1–142 (MLKQVEIFTD…CDELARAAAM (142 aa)) enclose the RNase H type-1 domain. 4 residues coordinate Mg(2+): aspartate 10, glutamate 48, aspartate 70, and aspartate 134.

This sequence belongs to the RNase H family. In terms of assembly, monomer. Mg(2+) is required as a cofactor.

Its subcellular location is the cytoplasm. The catalysed reaction is Endonucleolytic cleavage to 5'-phosphomonoester.. Its function is as follows. Endonuclease that specifically degrades the RNA of RNA-DNA hybrids. This Escherichia coli (strain 55989 / EAEC) protein is Ribonuclease H.